We begin with the raw amino-acid sequence, 540 residues long: MTAKDVKFRDGARQQIVKGVNVLADAVKVTLGPKGRNVVIERGFGAPVITKDGVSVAKEIELKDRFENMGAQIVKQVASKTADVAGDGTTTATVLAQAIVQEGMKHVAAGMNPMDLKRGIDKAVGAVLDELRKLSRPISTHKEIAQVGAISANSDEAIGKIIADAMEKVGKDGVITVEDGKSLENELDVVEGMQFDRGYVSPYFINDPAKQAAYLDDALILLHDKKISSVRDLLPILEAASKAGKPLLIVAEDVEAEALATLVVNSMRGILKVAAVKAPGFGDRRKAMLEDLAILTGATVISEETGKQLDKATLEDLGSAKRVEVRKDDTIIIDGAGDAARIEARVKSIRVQIDEATSDYDREKLQERVAKLAGGVAVIKVGAVTEVEMKEKKDRVDDALHATRAAVEEGIVPGGGVALLRARAALSDIRGANADQDAGIRIVLRALEAPLRVIAANAGDEPSVVISKVLEGKGNFGYNAATGEYGDLVDAGVVDPTKVTRTALQNAASIASLVLTTDATVAQAPKEESAESAPAPELGY.

ATP contacts are provided by residues 30–33 (TLGP), lysine 51, 87–91 (DGTTT), glycine 415, 479–481 (NAA), and aspartate 495.

Belongs to the chaperonin (HSP60) family. As to quaternary structure, forms a cylinder of 14 subunits composed of two heptameric rings stacked back-to-back. Interacts with the co-chaperonin GroES.

The protein localises to the cytoplasm. The catalysed reaction is ATP + H2O + a folded polypeptide = ADP + phosphate + an unfolded polypeptide.. Its function is as follows. Together with its co-chaperonin GroES, plays an essential role in assisting protein folding. The GroEL-GroES system forms a nano-cage that allows encapsulation of the non-native substrate proteins and provides a physical environment optimized to promote and accelerate protein folding. The sequence is that of Chaperonin GroEL 3 from Burkholderia cenocepacia (strain HI2424).